Consider the following 602-residue polypeptide: Leucine-rich repeat-containing protein 40 (602 aa).

Residues 1 to 22 are disordered; the sequence is MSRLKRIAGQDPRAGFKEGGRD. Ser-71 is subject to Phosphoserine. 20 LRR repeats span residues 83 to 104, 106 to 127, 129 to 150, 152 to 173, 175 to 196, 198 to 219, 221 to 242, 244 to 265, 266 to 286, 290 to 311, 313 to 335, 336 to 356, 400 to 421, 426 to 447, 450 to 472, 473 to 494, 496 to 517, 519 to 540, 543 to 564, and 566 to 586; these read DLTK…LRLL, ALTV…IREL, NLQK…ITNL, NLKC…FEQF, NLED…FSSL, SLVR…INRM, RLKH…LAGM, SLEL…PSCS, LLKE…EHLK, SILV…IILL, SLER…GNLH, LKFL…IINK, TLKI…VFDA, IITS…MVEL, MVSD…CVLQ, KLTF…VESL, RLQT…LYRI, TLET…KMKM, NLTT…LGNC, and NLRT…AILM.

The protein is Leucine-rich repeat-containing protein 40 (LRRC40) of Pongo abelii (Sumatran orangutan).